The following is a 191-amino-acid chain: Cell division protein SepF (191 aa).

Residues 157–178 (YLNESPAQPVQTTTSFGRTATP) are compositionally biased toward polar residues. The interval 157–191 (YLNESPAQPVQTTTSFGRTATPTPAWGTDSRYAAQ) is disordered.

The protein belongs to the SepF family. As to quaternary structure, homodimer. Interacts with FtsZ.

The protein localises to the cytoplasm. Cell division protein that is part of the divisome complex and is recruited early to the Z-ring. Probably stimulates Z-ring formation, perhaps through the cross-linking of FtsZ protofilaments. Its function overlaps with FtsA. The sequence is that of Cell division protein SepF from Synechococcus elongatus (strain ATCC 33912 / PCC 7942 / FACHB-805) (Anacystis nidulans R2).